The sequence spans 319 residues: 4-hydroxy-3-methylbut-2-enyl diphosphate reductase (319 aa).

Cys17 serves as a coordination point for [4Fe-4S] cluster. (2E)-4-hydroxy-3-methylbut-2-enyl diphosphate is bound by residues His46 and His79. Residues His46 and His79 each coordinate dimethylallyl diphosphate. Residues His46 and His79 each contribute to the isopentenyl diphosphate site. Cys101 provides a ligand contact to [4Fe-4S] cluster. (2E)-4-hydroxy-3-methylbut-2-enyl diphosphate is bound at residue His129. His129 provides a ligand contact to dimethylallyl diphosphate. An isopentenyl diphosphate-binding site is contributed by His129. Glu131 serves as the catalytic Proton donor. Thr170 is a binding site for (2E)-4-hydroxy-3-methylbut-2-enyl diphosphate. Cys200 serves as a coordination point for [4Fe-4S] cluster. 4 residues coordinate (2E)-4-hydroxy-3-methylbut-2-enyl diphosphate: Ser228, Ser229, Asn230, and Ser273. Residues Ser228, Ser229, Asn230, and Ser273 each contribute to the dimethylallyl diphosphate site. Positions 228, 229, 230, and 273 each coordinate isopentenyl diphosphate.

It belongs to the IspH family. The cofactor is [4Fe-4S] cluster.

It carries out the reaction isopentenyl diphosphate + 2 oxidized [2Fe-2S]-[ferredoxin] + H2O = (2E)-4-hydroxy-3-methylbut-2-enyl diphosphate + 2 reduced [2Fe-2S]-[ferredoxin] + 2 H(+). It catalyses the reaction dimethylallyl diphosphate + 2 oxidized [2Fe-2S]-[ferredoxin] + H2O = (2E)-4-hydroxy-3-methylbut-2-enyl diphosphate + 2 reduced [2Fe-2S]-[ferredoxin] + 2 H(+). It participates in isoprenoid biosynthesis; dimethylallyl diphosphate biosynthesis; dimethylallyl diphosphate from (2E)-4-hydroxy-3-methylbutenyl diphosphate: step 1/1. The protein operates within isoprenoid biosynthesis; isopentenyl diphosphate biosynthesis via DXP pathway; isopentenyl diphosphate from 1-deoxy-D-xylulose 5-phosphate: step 6/6. Its function is as follows. Catalyzes the conversion of 1-hydroxy-2-methyl-2-(E)-butenyl 4-diphosphate (HMBPP) into a mixture of isopentenyl diphosphate (IPP) and dimethylallyl diphosphate (DMAPP). Acts in the terminal step of the DOXP/MEP pathway for isoprenoid precursor biosynthesis. The chain is 4-hydroxy-3-methylbut-2-enyl diphosphate reductase from Cereibacter sphaeroides (strain ATCC 17029 / ATH 2.4.9) (Rhodobacter sphaeroides).